A 223-amino-acid polypeptide reads, in one-letter code: Protein disulfide-isomerase-like protein EhSep2 (223 aa).

Positions 1 to 17 (MALRSLTLLCAAAGASA) are cleaved as a signal peptide. The Thioredoxin domain maps to 18–125 (GAIELTPDNF…DELKKFAENE (108 aa)). A non-standard amino acid (selenocysteine) is located at residue Sec47. Positions 155-201 (EKRTEMLETLKKELADAESTHEALLKELQATYKESMDKLEKLKEESA) form a coiled coil. Positions 201–223 (APKIKLLKAATPAPKAEGAKDEV) are disordered. Low complexity predominate over residues 203-216 (KIKLLKAATPAPKA). The Prevents secretion from ER motif lies at 220-223 (KDEV).

The protein belongs to the protein disulfide isomerase family.

It localises to the endoplasmic reticulum lumen. This chain is Protein disulfide-isomerase-like protein EhSep2 (SEP2), found in Emiliania huxleyi (Coccolithophore).